Consider the following 154-residue polypeptide: Ribonuclease HI (154 aa).

Positions 1 to 142 (MQKQIEIFTD…CDQLAKAGAE (142 aa)) constitute an RNase H type-1 domain. Mg(2+) contacts are provided by Asp-10, Glu-48, Asp-70, and Asp-134.

The protein belongs to the RNase H family. In terms of assembly, monomer. Requires Mg(2+) as cofactor.

The protein localises to the cytoplasm. It catalyses the reaction Endonucleolytic cleavage to 5'-phosphomonoester.. In terms of biological role, endonuclease that specifically degrades the RNA of RNA-DNA hybrids. This is Ribonuclease HI (rnhA) from Pasteurella multocida (strain Pm70).